Here is a 294-residue protein sequence, read N- to C-terminus: Probable 2-(5''-triphosphoribosyl)-3'-dephosphocoenzyme-A synthase (294 aa).

Belongs to the CitG/MdcB family.

The catalysed reaction is 3'-dephospho-CoA + ATP = 2'-(5''-triphospho-alpha-D-ribosyl)-3'-dephospho-CoA + adenine. This chain is Probable 2-(5''-triphosphoribosyl)-3'-dephosphocoenzyme-A synthase, found in Streptococcus pyogenes serotype M18 (strain MGAS8232).